The primary structure comprises 62 residues: UPF0339 protein Atu0232 (62 aa).

This sequence belongs to the UPF0339 family.

The protein is UPF0339 protein Atu0232 of Agrobacterium fabrum (strain C58 / ATCC 33970) (Agrobacterium tumefaciens (strain C58)).